Reading from the N-terminus, the 292-residue chain is Glycine-rich RNA-binding protein RZ1B (292 aa).

One can recognise an RRM domain in the interval 12-90; the sequence is SRIFVGGLSW…KVISVNKAEP (79 aa). Ser20 is modified (phosphoserine). A disordered region spans residues 93-114; sequence GGEDVDQLKKGGGYSSRGKGTE. Residues 117-132 form a CCHC-type zinc finger; that stretch reads CFKCRRPGHWARDCPS. Basic and acidic residues-rich tracts occupy residues 180–210 and 220–268; these read DGRR…HYPF and FVSD…EGRP. A disordered region spans residues 180–292; that stretch reads DGRRDRDGGR…GGRPSSYERW (113 aa).

In terms of tissue distribution, expressed in roots, rosette and cauline leaves, stems, floral buds and flowers.

The protein resides in the nucleus. Binds RNA and DNA sequences non-specifically. May be involved in tolerance to cold stress. This is Glycine-rich RNA-binding protein RZ1B from Arabidopsis thaliana (Mouse-ear cress).